A 203-amino-acid chain; its full sequence is Probable chemoreceptor glutamine deamidase CheD (203 aa).

Belongs to the CheD family.

The catalysed reaction is L-glutaminyl-[protein] + H2O = L-glutamyl-[protein] + NH4(+). In terms of biological role, probably deamidates glutamine residues to glutamate on methyl-accepting chemotaxis receptors (MCPs), playing an important role in chemotaxis. This Methylobacillus flagellatus (strain ATCC 51484 / DSM 6875 / VKM B-1610 / KT) protein is Probable chemoreceptor glutamine deamidase CheD.